Here is a 916-residue protein sequence, read N- to C-terminus: Rab3 GTPase-activating protein catalytic subunit (916 aa).

Residues 530–574 are disordered; that stretch reads NSKRKSEGMVGKASSEEEEDEDDDEGEFFDCDDLTAGAGSPTKAV. Residues Ser543 and Ser544 each carry the phosphoserine modification. Residues 545 to 562 are compositionally biased toward acidic residues; that stretch reads EEEEDEDDDEGEFFDCDD.

It belongs to the Rab3-GAP catalytic subunit family. The Rab3 GTPase-activating complex is a heterodimer composed of Rab3GAP1 and Rab3-GAP.

It localises to the cytoplasm. In terms of biological role, catalytic subunit of the Rab3 GTPase-activating (Rab3GAP) complex composed of Rab3-GAP and Rab3GAP1, which has both GTPase-activating protein (GAP) activity towards Rab3, and guanine nucleotide exchange factor (GEF) activity towards Rab18. As part of the Rab3GAP complex, required for the rapid induction and sustained expression of synaptic homeostasis at the neuromuscular junction (NMJ). Also participates in the regulation of autophagy in tissues such as larval fat cells and adult muscles. The Rab3GAP complex, acts as a GAP for Rab3 by converting active Rab3-GTP to the inactive form Rab3-GDP. At the neuromuscular junction (NMJ), forms a presynaptic signaling mechanism with Rab3 that regulates progression of synaptic homeostasis at a late stage of vesicle release. Within this mechanism Rab3-GTP acts, directly or indirectly, to inhibit the progression of synaptic homeostasis, and Rab3-GAP functions to inactivate this action of Rab3-GTP. The Rab3GAP complex, acts as a GEF for Rab18 by promoting the conversion of inactive Rab18-GDP to the active form Rab18-GTP. Regulates autophagy as part of a Rab3GAP-Rab18 module. Once Rab18 is activated by the GEF Rab3GAP complex, the Rab3GAP-Rab18 module localizes to autophagosomes, and regulates autolysosome formation and maturation together with the Rab18 interacting effector, the PI3K/Vps34 Complex I. The chain is Rab3 GTPase-activating protein catalytic subunit from Drosophila melanogaster (Fruit fly).